The primary structure comprises 535 residues: Peptide chain release factor 3 (535 aa).

Residues Ala8–Arg278 enclose the tr-type G domain. GTP-binding positions include Ser17–Thr24, Asp85–His89, and Asn139–Asp142.

It belongs to the TRAFAC class translation factor GTPase superfamily. Classic translation factor GTPase family. PrfC subfamily.

It is found in the cytoplasm. Increases the formation of ribosomal termination complexes and stimulates activities of RF-1 and RF-2. It binds guanine nucleotides and has strong preference for UGA stop codons. It may interact directly with the ribosome. The stimulation of RF-1 and RF-2 is significantly reduced by GTP and GDP, but not by GMP. This Bordetella parapertussis (strain 12822 / ATCC BAA-587 / NCTC 13253) protein is Peptide chain release factor 3.